A 108-amino-acid chain; its full sequence is Large ribosomal subunit protein bL21 (108 aa).

This sequence belongs to the bacterial ribosomal protein bL21 family. As to quaternary structure, part of the 50S ribosomal subunit. Contacts protein L20.

Its function is as follows. This protein binds to 23S rRNA in the presence of protein L20. This chain is Large ribosomal subunit protein bL21, found in Buchnera aphidicola subsp. Acyrthosiphon pisum (strain 5A).